The primary structure comprises 405 residues: Arginine biosynthesis bifunctional protein ArgJ (405 aa).

6 residues coordinate substrate: Thr152, Lys178, Thr189, Glu276, Asn400, and Thr405. Catalysis depends on Thr189, which acts as the Nucleophile.

The protein belongs to the ArgJ family. As to quaternary structure, heterotetramer of two alpha and two beta chains.

Its subcellular location is the cytoplasm. The enzyme catalyses N(2)-acetyl-L-ornithine + L-glutamate = N-acetyl-L-glutamate + L-ornithine. It carries out the reaction L-glutamate + acetyl-CoA = N-acetyl-L-glutamate + CoA + H(+). The protein operates within amino-acid biosynthesis; L-arginine biosynthesis; L-ornithine and N-acetyl-L-glutamate from L-glutamate and N(2)-acetyl-L-ornithine (cyclic): step 1/1. Its pathway is amino-acid biosynthesis; L-arginine biosynthesis; N(2)-acetyl-L-ornithine from L-glutamate: step 1/4. In terms of biological role, catalyzes two activities which are involved in the cyclic version of arginine biosynthesis: the synthesis of N-acetylglutamate from glutamate and acetyl-CoA as the acetyl donor, and of ornithine by transacetylation between N(2)-acetylornithine and glutamate. This chain is Arginine biosynthesis bifunctional protein ArgJ, found in Pseudomonas savastanoi pv. phaseolicola (strain 1448A / Race 6) (Pseudomonas syringae pv. phaseolicola (strain 1448A / Race 6)).